The following is a 760-amino-acid chain: ATP-dependent zinc metalloprotease FtsH (760 aa).

The Cytoplasmic portion of the chain corresponds to 1 to 5 (MNRKN). The chain crosses the membrane as a helical span at residues 6-26 (VTRTITAIAVVVLLGWSFFYF). Over 27–110 (SDDTRGYKPV…KVSTVVNQGS (84 aa)) the chain is Extracellular. The helical transmembrane segment at 111–131 (ILGELLVYVLPLLLLVGLFVM) threads the bilayer. Residues 132-760 (FSRMQGGARM…EVSRTKPAHG (629 aa)) are Cytoplasmic-facing. ATP is bound at residue 203–210 (GPPGTGKT). His425 is a Zn(2+) binding site. Glu426 is a catalytic residue. 2 residues coordinate Zn(2+): His429 and Asp501. Residues 616 to 760 (DFGGRIPSDK…EVSRTKPAHG (145 aa)) are disordered. The segment covering 650-669 (AFKAAIAQATQAAEAARSDA) has biased composition (low complexity). Positions 740 to 750 (GSDESSAEQDD) are enriched in acidic residues.

The protein in the central section; belongs to the AAA ATPase family. It in the C-terminal section; belongs to the peptidase M41 family. Homohexamer. Zn(2+) serves as cofactor.

It localises to the cell membrane. Functionally, acts as a processive, ATP-dependent zinc metallopeptidase for both cytoplasmic and membrane proteins. Plays a role in the quality control of integral membrane proteins. The protein is ATP-dependent zinc metalloprotease FtsH of Mycobacterium tuberculosis (strain CDC 1551 / Oshkosh).